A 340-amino-acid polypeptide reads, in one-letter code: Aldo-keto reductase yakc [NADP(+)] (340 aa).

Tyrosine 56 acts as the Proton donor in catalysis. A substrate-binding site is contributed by histidine 126. NADP(+) is bound at residue 208–218; it reads APLGRGFLTGA.

The protein belongs to the aldo/keto reductase family. Aldo/keto reductase 2 subfamily. Monomer.

In Schizosaccharomyces pombe (strain 972 / ATCC 24843) (Fission yeast), this protein is Aldo-keto reductase yakc [NADP(+)] (yakc).